The chain runs to 520 residues: Keratin, type II cytoskeletal 4 (520 aa).

The segment at 1 to 136 is head; the sequence is MIARQQCVRG…DPEIQKVRTE (136 aa). Arginine 13 is subject to Omega-N-methylarginine. Residues 137 to 172 form a coil 1A region; sequence EREQIKLLNNKFASFIDKVQFLEQQNKVLETKWNLL. One can recognise an IF rod domain in the interval 137-450; sequence EREQIKLLNN…KLLEGEEYRM (314 aa). The segment at 173–191 is linker 1; sequence QQQTTTTSSKNLEPLFETY. The coil 1B stretch occupies residues 192–284; it reads LSVLRKQLDT…LYDAELSQMQ (93 aa). Residues 285–307 form a linker 12 region; sequence THVSDTSVVLSMDNNRNLDLDSI. A coil 2 region spans residues 308 to 447; that stretch reads IAEVRAQYEE…TYRKLLEGEE (140 aa). The tract at residues 448 to 520 is tail; sequence YRMSGECQSA…ISTTTLNKRR (73 aa). The disordered stretch occupies residues 500–520; that stretch reads GSVSGSSSSKIISTTTLNKRR. A compositionally biased stretch (low complexity) spans 503–514; the sequence is SGSSSSKIISTT.

Belongs to the intermediate filament family. As to quaternary structure, heterotetramer of two type I and two type II keratins. Keratin-4 is generally associated with keratin-13. In terms of tissue distribution, detected in the suprabasal layer of the stratified epithelium of the esophagus, exocervix, vagina, mouth and lingual mucosa, and in cells and cell clusters in the mucosa and serous gland ducts of the esophageal submucosa (at protein level). Expressed widely in the exocervix and esophageal epithelium, with lowest levels detected in the basal cell layer.

The sequence is that of Keratin, type II cytoskeletal 4 (KRT4) from Homo sapiens (Human).